The following is a 95-amino-acid chain: Large ribosomal subunit protein bL31 (95 aa).

Residues 68-95 (AGLNNINKKPEKKKIQGKSEPRKSLNEL) are disordered. Positions 80–95 (KKIQGKSEPRKSLNEL) are enriched in basic and acidic residues.

This sequence belongs to the bacterial ribosomal protein bL31 family. Type A subfamily. Part of the 50S ribosomal subunit.

Its function is as follows. Binds the 23S rRNA. This is Large ribosomal subunit protein bL31 from Ureaplasma parvum serovar 3 (strain ATCC 700970).